Reading from the N-terminus, the 123-residue chain is S-adenosylmethionine decarboxylase proenzyme 2 (123 aa).

The Schiff-base intermediate with substrate; via pyruvic acid role is filled by S65. S65 carries the post-translational modification Pyruvic acid (Ser); by autocatalysis. Catalysis depends on H70, which acts as the Proton acceptor; for processing activity. The active-site Proton donor; for catalytic activity is the C85.

This sequence belongs to the prokaryotic AdoMetDC family. Type 1 subfamily. In terms of assembly, heterotetramer of two alpha and two beta chains arranged as a dimer of alpha/beta heterodimers. Pyruvate is required as a cofactor. In terms of processing, is synthesized initially as an inactive proenzyme. Formation of the active enzyme involves a self-maturation process in which the active site pyruvoyl group is generated from an internal serine residue via an autocatalytic post-translational modification. Two non-identical subunits are generated from the proenzyme in this reaction, and the pyruvate is formed at the N-terminus of the alpha chain, which is derived from the carboxyl end of the proenzyme. The post-translation cleavage follows an unusual pathway, termed non-hydrolytic serinolysis, in which the side chain hydroxyl group of the serine supplies its oxygen atom to form the C-terminus of the beta chain, while the remainder of the serine residue undergoes an oxidative deamination to produce ammonia and the pyruvoyl group blocking the N-terminus of the alpha chain.

It catalyses the reaction S-adenosyl-L-methionine + H(+) = S-adenosyl 3-(methylsulfanyl)propylamine + CO2. It participates in amine and polyamine biosynthesis; S-adenosylmethioninamine biosynthesis; S-adenosylmethioninamine from S-adenosyl-L-methionine: step 1/1. Catalyzes the decarboxylation of S-adenosylmethionine to S-adenosylmethioninamine (dcAdoMet), the propylamine donor required for the synthesis of the polyamines spermine and spermidine from the diamine putrescine. The sequence is that of S-adenosylmethionine decarboxylase proenzyme 2 from Bacillus cereus (strain ZK / E33L).